A 341-amino-acid chain; its full sequence is Protein FAM50A (341 aa).

2 disordered regions span residues 1 to 27 (MAQYKGAASEAGRAMQLMKKREREREQ) and 80 to 147 (LVKE…EIEE). The span at 80-115 (LVKEREKQLAKKEQSKELQLKLEKQKEKKRKEEQKR) shows a compositional bias: basic and acidic residues. The span at 125-147 (DEGEDEEEEEEEEEEEEEDEIEE) shows a compositional bias: acidic residues.

This sequence belongs to the FAM50 family.

Its subcellular location is the nucleus. Probably involved in the regulation of pre-mRNA splicing. The chain is Protein FAM50A (fam50a) from Danio rerio (Zebrafish).